Consider the following 159-residue polypeptide: MNIKIVCVGKLKEKYFKDAIAEYKKRLSRFAKVSIVQVPDEKAPEKFSAAEDERVKQIEGERILSKIKDKEYVYVTAIKGKQRSSEEFAKEIQNLATYGHSDITFVIGGSLGTSNAVNKRGDDLISFGKLTMPHQLMRVVLIEQIYRAFMINSGSPYHK.

S-adenosyl-L-methionine-binding positions include Gly-108 and 127–132 (FGKLTM).

The protein belongs to the RNA methyltransferase RlmH family. In terms of assembly, homodimer.

Its subcellular location is the cytoplasm. It catalyses the reaction pseudouridine(1915) in 23S rRNA + S-adenosyl-L-methionine = N(3)-methylpseudouridine(1915) in 23S rRNA + S-adenosyl-L-homocysteine + H(+). Specifically methylates the pseudouridine at position 1915 (m3Psi1915) in 23S rRNA. The sequence is that of Ribosomal RNA large subunit methyltransferase H from Lactobacillus helveticus (strain DPC 4571).